Reading from the N-terminus, the 2103-residue chain is Orsellinic acid synthase (2103 aa).

The tract at residues 17–232 (DAVHDLNVRS…KRPELAHATI (216 aa)) is N-terminal acylcarrier protein transacylase domain (SAT). A Ketosynthase family 3 (KS3) domain is found at 348 to 782 (ADAIAVVGMS…GGNVSMLLQD (435 aa)). Residues C525, H660, and H702 each act as for beta-ketoacyl synthase activity in the active site. A malonyl-CoA:ACP transacylase (MAT) domain region spans residues 881 to 1197 (VFTFTGQGAQ…RRGGDDWQSV (317 aa)). Catalysis depends on S973, which acts as the For acyl/malonyl transferase activity. The segment at 1272 to 1409 (HAVEKLQREE…GQPDSAVRRD (138 aa)) is N-terminal hotdog fold. The 311-residue stretch at 1272–1582 (HAVEKLQREE…FKKLERDFFA (311 aa)) folds into the PKS/mFAS DH domain. The product template (PT) domain stretch occupies residues 1303–1579 (GHVVDESAIC…DICFKKLERD (277 aa)). H1304 (proton acceptor; for dehydratase activity) is an active-site residue. Residues 1433–1582 (VHAMDTALFY…FKKLERDFFA (150 aa)) are C-terminal hotdog fold. D1493 (proton donor; for dehydratase activity) is an active-site residue. The disordered stretch occupies residues 1592–1638 (STKPVAAAPAKSMAKRARQLAPSPSPSSSSGSNTPMSRSPTPSSVSD). Composition is skewed to low complexity over residues 1594 to 1603 (KPVAAAPAKS) and 1617 to 1631 (PSSS…SRSP). Carrier domains are found at residues 1640–1716 (VDLG…GGSA) and 1741–1815 (PAPS…DDDA). S1676 is subject to O-(pantetheine 4'-phosphoryl)serine. Residues 1722–1743 (EDITKPTPSPEQTQARKQGPAP) form a disordered region. The residue at position 1775 (S1775) is an O-(pantetheine 4'-phosphoryl)serine. Positions 1809-1838 (EALDDDAEEESAPAQTSTNPAKETTIDSSR) are disordered. Residues 1810–1819 (ALDDDAEEES) show a composition bias toward acidic residues. A compositionally biased stretch (polar residues) spans 1823–1836 (QTSTNPAKETTIDS). The thioesterase (TE) domain stretch occupies residues 1849-2082 (ASYIHLKALP…TVNGDHFSMM (234 aa)).

The catalysed reaction is 3 malonyl-CoA + acetyl-CoA + 2 H(+) = orsellinate + 3 CO2 + 4 CoA. The protein operates within secondary metabolite biosynthesis. Its function is as follows. Non-reducing polyketide synthase; part of the gene cluster that mediates the biosynthesis of orsellinic acid, as well as of the cathepsin K inhibitors F9775 A and F9775 B. The non-reducing polyketide synthase orsA produces orsellinic acid by condensing acetyl-CoA with 3 malonyl-CoA units. Further modifications by the decarboxylase orsB and the tyrosinase-like protein orsC lead to the production of F9775 A and F9775 B. The functions of orsD and orsE remain unclear since only orsB and orsC are required to convert orsellinic acid into F9775 A and F9775 B. In Emericella nidulans (strain FGSC A4 / ATCC 38163 / CBS 112.46 / NRRL 194 / M139) (Aspergillus nidulans), this protein is Orsellinic acid synthase.